Consider the following 237-residue polypeptide: Uridylate kinase (237 aa).

12 to 15 (KLSG) is a binding site for ATP. Residues 20-25 (GENGFG) are involved in allosteric activation by GTP. G54 is a UMP binding site. Residues G55 and R59 each contribute to the ATP site. Residues D72 and 133–140 (TGNPYFST) each bind UMP. Residues Y166 and D169 each coordinate ATP.

This sequence belongs to the UMP kinase family. As to quaternary structure, homohexamer.

Its subcellular location is the cytoplasm. It carries out the reaction UMP + ATP = UDP + ADP. Its pathway is pyrimidine metabolism; CTP biosynthesis via de novo pathway; UDP from UMP (UMPK route): step 1/1. Allosterically activated by GTP. Inhibited by UTP. Functionally, catalyzes the reversible phosphorylation of UMP to UDP. This is Uridylate kinase from Clostridium perfringens (strain ATCC 13124 / DSM 756 / JCM 1290 / NCIMB 6125 / NCTC 8237 / Type A).